The following is a 463-amino-acid chain: Glucagon-like peptide 1 receptor (463 aa).

The first 21 residues, 1 to 21 (MASTPSLLRLALLLLGAVGRA), serve as a signal peptide directing secretion. At 22 to 139 (GPRPQGTTVS…KRGERNFPEE (118 aa)) the chain is on the extracellular side. 3 disulfide bridges follow: cysteine 46-cysteine 71, cysteine 62-cysteine 104, and cysteine 85-cysteine 126. 3 N-linked (GlcNAc...) asparagine glycosylation sites follow: asparagine 63, asparagine 82, and asparagine 115. Residues 140–164 (QLLSLYIIYTVGYALSFSALVIASA) form a helical membrane-spanning segment. At 165–175 (ILVGFRHLHCT) the chain is on the cytoplasmic side. The helical transmembrane segment at 176–201 (RNYIHLNLFASFILRALSVFIKDAAL) threads the bilayer. Residues 202 to 227 (KWMYSTAAQQHQWDGLLSYQDSLGCR) are Extracellular-facing. A disulfide bridge connects residues cysteine 226 and cysteine 296. Residues 228 to 251 (LVFLLMQYCVAANYYWLLVEGVYL) traverse the membrane as a helical segment. Topologically, residues 252–265 (YTLLAFSVFSEQRI) are cytoplasmic. A helical membrane pass occupies residues 266–290 (FKLYLSIGWGVPLLFVIPWGIVKYL). Residues 291-305 (YEDEGCWTRNSNMNY) lie on the Extracellular side of the membrane. Residues 306–328 (WLIIRLPILFAIGVNFLIFIRVI) traverse the membrane as a helical segment. Residues 329–348 (CIVVSKLKANLMCKTDIKCR) lie on the Cytoplasmic side of the membrane. Cysteine 341 is modified (ADP-ribosylcysteine). At arginine 348 the chain carries ADP-ribosylarginine. Residues 349–370 (LAKSTLTLIPLLGTHEVIFAFV) traverse the membrane as a helical segment. The segment at 352 to 355 (STLT) is important for allosteric inhibitor binding. Over 371–383 (MDEHARGTLRFIK) the chain is Extracellular. Residues 384 to 404 (LFTELSFTSFQGLMVAILYCF) traverse the membrane as a helical segment. Topologically, residues 405–463 (VNNEVQMEFRKCWERWRLEHLNIQRDCSMKPLKCPTSSVSSGATVGSSVYAATCQSSYS) are cytoplasmic.

Belongs to the G-protein coupled receptor 2 family. As to quaternary structure, may form homodimers and heterodimers with GIPR. N-glycosylation enhances cell surface expression and lengthens receptor half-life by preventing degradation in the ER. Detected in pancreatic islets (at protein level). Detected in pancreatic islets and lungs.

The protein localises to the cell membrane. G-protein coupled receptor for glucagon-like peptide 1 (GLP-1). Ligand binding triggers activation of a signaling cascade that leads to the activation of adenylyl cyclase and increased intracellular cAMP levels. Plays a role in regulating insulin secretion in response to GLP-1. The protein is Glucagon-like peptide 1 receptor (Glp1r) of Mus musculus (Mouse).